Here is a 294-residue protein sequence, read N- to C-terminus: MKNNIVIITGITASGKSELCDNLIEKYGNISIINCDSKQVYEEIPIITAQPPKQEVFYKLYGYVSAKENYSVGLWLEDLEKEVNHALENAQIPIITGGSGLYISSLIKGLSSMPQISQKVRKNVSELRKNLSKEEFYKLALSKDPRIQGKVFMNDSHRLSRALEVITETGKSIFVWQENRQPPLFNNFKIYTILPKREDVYRKINSRFITMIENGAIDEVKKLLSMNLAPHLPAMKAHGVPEIIKYLKGEITLDEAIQIAQTNTRHYAKRQYTWFKKQFLNAEVIDCANKLKIF.

10-17 (GITASGKS) serves as a coordination point for ATP. 12-17 (TASGKS) contributes to the substrate binding site. The segment at 36–39 (DSKQ) is interaction with substrate tRNA.

It belongs to the IPP transferase family. As to quaternary structure, monomer. Mg(2+) is required as a cofactor.

The catalysed reaction is adenosine(37) in tRNA + dimethylallyl diphosphate = N(6)-dimethylallyladenosine(37) in tRNA + diphosphate. Its function is as follows. Catalyzes the transfer of a dimethylallyl group onto the adenine at position 37 in tRNAs that read codons beginning with uridine, leading to the formation of N6-(dimethylallyl)adenosine (i(6)A). The chain is tRNA dimethylallyltransferase from Wolbachia sp. subsp. Drosophila simulans (strain wRi).